The chain runs to 61 residues: Tryptophyllin-T1 (61 aa).

Positions 1-22 are cleaved as a signal peptide; sequence MDFLKKSLFLVLFLGLVSISLC. Positions 23-53 are excised as a propeptide; it reads DEEKRQDDDEASEREEKKEIHEEGNQEERRD. Residues 25–61 are disordered; that stretch reads EKRQDDDEASEREEKKEIHEEGNQEERRDRPPSWIPK. The segment covering 36 to 55 has biased composition (basic and acidic residues); it reads REEKKEIHEEGNQEERRDRP. Pro-56 carries the post-translational modification 4-hydroxyproline; partial.

The protein belongs to the frog skin active peptide (FSAP) family. Tryptophillin subfamily. Expressed by the skin glands.

It is found in the secreted. In Pithecopus azureus (Orange-legged monkey tree frog), this protein is Tryptophyllin-T1.